Reading from the N-terminus, the 702-residue chain is Lipase maturation factor 2 (702 aa).

The next 10 membrane-spanning stretches (helical) occupy residues Leu-10–Ile-30, Ala-75–Leu-95, Phe-102–Leu-122, Tyr-123–Leu-143, Asp-164–Val-184, Leu-226–Ile-246, Leu-259–Val-279, Leu-316–Leu-336, Val-363–Leu-383, and Phe-396–Ser-416. An N-linked (GlcNAc...) asparagine glycan is attached at Asn-488. The helical transmembrane segment at Gln-628–Ile-648 threads the bilayer. The tract at residues Leu-660–Lys-702 is disordered. The segment covering Gln-665–Ala-681 has biased composition (basic and acidic residues). Residues Val-682–Ser-695 are compositionally biased toward polar residues.

The protein belongs to the lipase maturation factor family.

It is found in the endoplasmic reticulum membrane. Its function is as follows. Involved in the maturation of specific proteins in the endoplasmic reticulum. May be required for maturation and transport of active lipoprotein lipase (LPL) through the secretory pathway. The polypeptide is Lipase maturation factor 2 (Lmf2) (Rattus norvegicus (Rat)).